Here is a 352-residue protein sequence, read N- to C-terminus: Putative pectinesterase 11 (352 aa).

A helical membrane pass occupies residues 13 to 35 (ANYHHIIIINIFILSSITSSSMA). An N-linked (GlcNAc...) asparagine glycan is attached at asparagine 76. The active-site Proton donor is the aspartate 175. Aspartate 196 functions as the Nucleophile in the catalytic mechanism. Asparagine 218 carries N-linked (GlcNAc...) asparagine glycosylation. 2 residues coordinate substrate: arginine 252 and tryptophan 254. The segment at 332–352 (LRPAPSHFKNAPKQTQNKEIN) is disordered. Over residues 343–352 (PKQTQNKEIN) the composition is skewed to polar residues.

The protein belongs to the pectinesterase family.

The protein localises to the membrane. The catalysed reaction is [(1-&gt;4)-alpha-D-galacturonosyl methyl ester](n) + n H2O = [(1-&gt;4)-alpha-D-galacturonosyl](n) + n methanol + n H(+). It functions in the pathway glycan metabolism; pectin degradation; 2-dehydro-3-deoxy-D-gluconate from pectin: step 1/5. In terms of biological role, acts in the modification of cell walls via demethylesterification of cell wall pectin. The chain is Putative pectinesterase 11 (PME11) from Arabidopsis thaliana (Mouse-ear cress).